The sequence spans 320 residues: GDP-L-fucose synthase (320 aa).

14 to 20 (GGSGLVG) contacts NADP(+). Y142 functions as the Proton donor/acceptor in the catalytic mechanism. Residues K146, 169–172 (PTNI), and H185 contribute to the NADP(+) site. Substrate-binding residues include K193, R214, and D276.

Belongs to the NAD(P)-dependent epimerase/dehydratase family. Fucose synthase subfamily.

It catalyses the reaction GDP-beta-L-fucose + NADP(+) = GDP-4-dehydro-alpha-D-rhamnose + NADPH + H(+). It participates in nucleotide-sugar biosynthesis; GDP-L-fucose biosynthesis via de novo pathway; GDP-L-fucose from GDP-alpha-D-mannose: step 2/2. In terms of biological role, catalyzes the two-step NADP-dependent conversion of GDP-4-dehydro-6-deoxy-D-mannose to GDP-fucose, involving an epimerase and a reductase reaction. In Dictyostelium discoideum (Social amoeba), this protein is GDP-L-fucose synthase (ger).